Here is a 485-residue protein sequence, read N- to C-terminus: Glutamyl-tRNA(Gln) amidotransferase subunit A (485 aa).

Catalysis depends on charge relay system residues Lys-80 and Ser-155. Catalysis depends on Ser-179, which acts as the Acyl-ester intermediate.

It belongs to the amidase family. GatA subfamily. Heterotrimer of A, B and C subunits.

It catalyses the reaction L-glutamyl-tRNA(Gln) + L-glutamine + ATP + H2O = L-glutaminyl-tRNA(Gln) + L-glutamate + ADP + phosphate + H(+). Its function is as follows. Allows the formation of correctly charged Gln-tRNA(Gln) through the transamidation of misacylated Glu-tRNA(Gln) in organisms which lack glutaminyl-tRNA synthetase. The reaction takes place in the presence of glutamine and ATP through an activated gamma-phospho-Glu-tRNA(Gln). The chain is Glutamyl-tRNA(Gln) amidotransferase subunit A from Endomicrobium trichonymphae.